A 282-amino-acid polypeptide reads, in one-letter code: Putative SLC9B1-like protein SLC9B1P1 (282 aa).

7 consecutive transmembrane segments (helical) span residues 27–47, 51–71, 87–107, 135–155, 174–194, 198–218, and 239–259; these read LLAI…GGMI, IASL…GFFV, GFLV…IGLH, IITN…GAEV, LALC…GFSF, IFIA…GPLA, and VAFL…GILG.

The protein belongs to the monovalent cation:proton antiporter 1 (CPA1) transporter (TC 2.A.36) family.

The protein resides in the membrane. This chain is Putative SLC9B1-like protein SLC9B1P1 (SLC9B1P1), found in Homo sapiens (Human).